The following is a 236-amino-acid chain: Putative N-acetylmannosamine-6-phosphate 2-epimerase (236 aa).

The protein belongs to the NanE family.

The enzyme catalyses an N-acyl-D-glucosamine 6-phosphate = an N-acyl-D-mannosamine 6-phosphate. It functions in the pathway amino-sugar metabolism; N-acetylneuraminate degradation; D-fructose 6-phosphate from N-acetylneuraminate: step 3/5. Converts N-acetylmannosamine-6-phosphate (ManNAc-6-P) to N-acetylglucosamine-6-phosphate (GlcNAc-6-P). This Listeria welshimeri serovar 6b (strain ATCC 35897 / DSM 20650 / CCUG 15529 / CIP 8149 / NCTC 11857 / SLCC 5334 / V8) protein is Putative N-acetylmannosamine-6-phosphate 2-epimerase.